The primary structure comprises 358 residues: Protein FAM50 homolog (358 aa).

The segment covering alanine 104–lysine 113 has biased composition (basic and acidic residues). A disordered region spans residues alanine 104–glutamate 151. Acidic residues predominate over residues aspartate 122–glutamate 137. Positions glycine 138–glutamate 151 are enriched in basic and acidic residues.

The protein belongs to the FAM50 family.

This is Protein FAM50 homolog from Anopheles gambiae (African malaria mosquito).